The primary structure comprises 341 residues: tRNA N6-adenosine threonylcarbamoyltransferase (341 aa).

The Fe cation site is built by H111 and H115. Substrate is bound by residues 134-138, D167, G180, and N276; that span reads LVSGG. Position 304 (D304) interacts with Fe cation.

This sequence belongs to the KAE1 / TsaD family. Fe(2+) serves as cofactor.

It localises to the cytoplasm. It carries out the reaction L-threonylcarbamoyladenylate + adenosine(37) in tRNA = N(6)-L-threonylcarbamoyladenosine(37) in tRNA + AMP + H(+). Its function is as follows. Required for the formation of a threonylcarbamoyl group on adenosine at position 37 (t(6)A37) in tRNAs that read codons beginning with adenine. Is involved in the transfer of the threonylcarbamoyl moiety of threonylcarbamoyl-AMP (TC-AMP) to the N6 group of A37, together with TsaE and TsaB. TsaD likely plays a direct catalytic role in this reaction. This Pseudomonas putida (strain ATCC 700007 / DSM 6899 / JCM 31910 / BCRC 17059 / LMG 24140 / F1) protein is tRNA N6-adenosine threonylcarbamoyltransferase.